We begin with the raw amino-acid sequence, 364 residues long: 3-isopropylmalate dehydrogenase (364 aa).

Residue G76–E89 coordinates NAD(+). Substrate contacts are provided by R97, R107, R136, and D225. Mg(2+) is bound by residues D225, D249, and D253. G283 to N295 contacts NAD(+).

This sequence belongs to the isocitrate and isopropylmalate dehydrogenases family. LeuB type 1 subfamily. As to quaternary structure, homodimer. The cofactor is Mg(2+). It depends on Mn(2+) as a cofactor.

The protein resides in the cytoplasm. It catalyses the reaction (2R,3S)-3-isopropylmalate + NAD(+) = 4-methyl-2-oxopentanoate + CO2 + NADH. It participates in amino-acid biosynthesis; L-leucine biosynthesis; L-leucine from 3-methyl-2-oxobutanoate: step 3/4. Functionally, catalyzes the oxidation of 3-carboxy-2-hydroxy-4-methylpentanoate (3-isopropylmalate) to 3-carboxy-4-methyl-2-oxopentanoate. The product decarboxylates to 4-methyl-2 oxopentanoate. In Shewanella oneidensis (strain ATCC 700550 / JCM 31522 / CIP 106686 / LMG 19005 / NCIMB 14063 / MR-1), this protein is 3-isopropylmalate dehydrogenase.